The sequence spans 1714 residues: Intersectin-1 (1714 aa).

The EH 1 domain maps to 21–109 (ERAKHDQQFL…PVMKQQPVAI (89 aa)). Positions 53 to 88 (LPQPVLAQIWALADMNNDGRMDQVEFSIAMKLIKLK) constitute an EF-hand 1 domain. Ca(2+) contacts are provided by D66, N68, D70, R72, and E77. S203 carries the phosphoserine modification. The EH 2 domain occupies 221 to 310 (SRLKYRQLFN…PEYIPPSFRR (90 aa)). Residues 254–289 (LPQAQLASIWNLSDIDQDGKLTAEEFILAMHLIDVA) enclose the EF-hand 2 domain. 5 residues coordinate Ca(2+): D267, D269, D271, K273, and E278. Over residues 310–325 (RVRSGSGMSVISSSSV) the composition is skewed to low complexity. Disordered regions lie at residues 310–356 (RVRS…KREN) and 614–706 (SKQQ…QSRL). A phosphoserine mark is found at S318, S334, and S335. The interval 326 to 702 (DQRLPEEPSS…ERAKPEMQDK (377 aa)) is KLERQ. Basic and acidic residues-rich tracts occupy residues 340–356 (QPEK…KREN) and 622–706 (RSLE…QSRL). A coiled-coil region spans residues 354-658 (RENFERGSVE…QRRVQERDKQ (305 aa)). A Phosphoserine modification is found at S685. The region spanning 738-799 (VKVVYYRALY…PANYAEKIPE (62 aa)) is the SH3 1 domain. Residues 827–863 (APLPVTSSEPSTTPNNWADFSSTWPSSSNEKPETDNW) form a disordered region. Polar residues predominate over residues 831–855 (VTSSEPSTTPNNWADFSSTWPSSSN). T890 bears the Phosphothreonine mark. 3 positions are modified to phosphoserine: S894, S895, and S897. The SH3 2 domain occupies 906 to 964 (VEGLQAQALYPWRAKKDNHLNFNKSDVITVLEQQDMWWFGEVQGQKGWFPKSYVKLISG). Phosphoserine is present on S971. Phosphothreonine is present on T977. 2 positions are modified to phosphoserine: S979 and S988. SH3 domains lie at 995 to 1053 (IPGE…LKDS) and 1067 to 1131 (KKPE…LLSP). The interval 1067 to 1131 (KKPEIAQVIA…PANYVKLLSP (65 aa)) is required for interaction with FCHSD2. The Bipartite nuclear localization signal; in isoform 2 motif lies at 1097 to 1120 (RKKNPGGWWEGELQARGKKRQIGW). S1130 carries the phosphoserine modification. T1137 bears the Phosphothreonine mark. The 60-residue stretch at 1148–1207 (PAVCQVIGMYDYTAQNDDELAFSKGQIINVLNKEDPDWWKGEVSGQVGLFPSNYVKLTTD) folds into the SH3 5 domain. The DH domain occupies 1230–1416 (KRQGYIHELI…EELCSQVNEG (187 aa)). Positions 1455–1564 (KFLHSGKLYK…WVQKIKAASE (110 aa)) constitute a PH domain. The region spanning 1572 to 1688 (KKREKAYLVR…KKDQGSKGPV (117 aa)) is the C2 domain. S1638 is modified (phosphoserine). Positions 1660, 1663, and 1666 each coordinate Ca(2+).

In terms of assembly, interacts (via DH domain) with CDC42. Interacts (via SH3 domain 1) with WASL. Interacts with dynamin, SNAP25 and SNAP23. Interacts with clathrin-associated proteins and other components of the endocytic machinery, such as SPIN90, EPS15, EPN1, EPN2, STON2, FCHO1, FCHO2 and DAB2. Interacts (via SH3 domains) with REPS1 and SGIP1. Interacts with ARHGAP31. Interacts with ADAM15. Interacts with PRRT2. Interacts (via SH3 domain 4) with FCHSD2 (via SH3 domain 2). Interacts (via SH3 domain 1) with DENND2B. Interacts (via SH3 domains) with CBL. Isoform 2: Interacts with CBL and DNM1. Isoform 2: Interacts with LMNA. Isoform 2: Interacts with importin subunit KPNA1; this is likely to mediate its import into the nucleus. Interacts with DNM2. It depends on Ca(2+) as a cofactor. In terms of tissue distribution, detected in brain, adrenal gland and heart. Detected in neurons at the calyx of Held (at protein level). Isoform 1: Primarily detected in brain neurons. Isoform 2: Primarily detected in glia (at protein level). Widely expressed. Expressed at high levels in brain, heart and skeletal muscle.

The protein resides in the endomembrane system. The protein localises to the synapse. Its subcellular location is the synaptosome. It is found in the cell projection. It localises to the lamellipodium. The protein resides in the cell membrane. The protein localises to the membrane. Its subcellular location is the clathrin-coated pit. It is found in the recycling endosome. It localises to the endosome. The protein resides in the cytoplasmic vesicle. The protein localises to the cytoplasm. Its subcellular location is the nucleus envelope. Its function is as follows. Adapter protein that provides a link between the endocytic membrane traffic and the actin assembly machinery. Acts as a guanine nucleotide exchange factor (GEF) for CDC42, and thereby stimulates actin nucleation mediated by WASL and the ARP2/3 complex. Plays a role in the assembly and maturation of clathrin-coated vesicles. Recruits FCHSD2 to clathrin-coated pits. Involved in endocytosis of activated EGFR, and probably also other growth factor receptors. Involved in endocytosis of integrin beta-1 (ITGB1) and transferrin receptor (TFR); internalization of ITGB1 as DAB2-dependent cargo but not TFR may involve association with DAB2. Promotes ubiquitination and subsequent degradation of EGFR, and thereby contributes to the down-regulation of EGFR-dependent signaling pathways. In chromaffin cells, required for normal exocytosis of catecholamines. Required for rapid replenishment of release-ready synaptic vesicles at presynaptic active zones. Inhibits ARHGAP31 activity toward RAC1. In terms of biological role, plays a role in synaptic vesicle endocytosis in brain neurons. This chain is Intersectin-1, found in Mus musculus (Mouse).